Reading from the N-terminus, the 213-residue chain is MPSLTAFFGGTFDPIHYGHLQPVTALAKLVGLTQVVLMPNNVPPHRQQPEASSRQRFHMAELAVEGNPLFTVDDRELQRQTPSYTIDTLEALRAEKGHDAPLGFIIGQDSLLTLHHWHRWQDLLGVCHLLVCARPGYRSTLETPELQQWLDDHLTHAPEDLHQQPHGRIFLADTPLVTISATDIRQRRQQGLDCHDLLPPVVLRYINEHGLYQ.

Belongs to the NadD family.

The enzyme catalyses nicotinate beta-D-ribonucleotide + ATP + H(+) = deamido-NAD(+) + diphosphate. It functions in the pathway cofactor biosynthesis; NAD(+) biosynthesis; deamido-NAD(+) from nicotinate D-ribonucleotide: step 1/1. Catalyzes the reversible adenylation of nicotinate mononucleotide (NaMN) to nicotinic acid adenine dinucleotide (NaAD). The polypeptide is Probable nicotinate-nucleotide adenylyltransferase (Pectobacterium atrosepticum (strain SCRI 1043 / ATCC BAA-672) (Erwinia carotovora subsp. atroseptica)).